Reading from the N-terminus, the 463-residue chain is Phosphoglucosamine mutase (463 aa).

Residue S102 is the Phosphoserine intermediate of the active site. The Mg(2+) site is built by S102, D240, D242, and D244. S102 carries the phosphoserine modification.

The protein belongs to the phosphohexose mutase family. Mg(2+) is required as a cofactor. Activated by phosphorylation.

It carries out the reaction alpha-D-glucosamine 1-phosphate = D-glucosamine 6-phosphate. Catalyzes the conversion of glucosamine-6-phosphate to glucosamine-1-phosphate. The protein is Phosphoglucosamine mutase of Mycobacterium leprae (strain Br4923).